Reading from the N-terminus, the 314-residue chain is Ribosomal RNA small subunit methyltransferase H (314 aa).

S-adenosyl-L-methionine contacts are provided by residues 37-39 (GSH), D57, F84, D105, and Q112.

The protein belongs to the methyltransferase superfamily. RsmH family.

It localises to the cytoplasm. It carries out the reaction cytidine(1402) in 16S rRNA + S-adenosyl-L-methionine = N(4)-methylcytidine(1402) in 16S rRNA + S-adenosyl-L-homocysteine + H(+). Its function is as follows. Specifically methylates the N4 position of cytidine in position 1402 (C1402) of 16S rRNA. The chain is Ribosomal RNA small subunit methyltransferase H from Fusobacterium nucleatum subsp. nucleatum (strain ATCC 25586 / DSM 15643 / BCRC 10681 / CIP 101130 / JCM 8532 / KCTC 2640 / LMG 13131 / VPI 4355).